An 830-amino-acid chain; its full sequence is Histone acetyltransferase KAT2A (830 aa).

Positions 1 to 94 (MAEPSQAPNP…RKAQVRGLPR (94 aa)) are disordered. Ala2 carries the post-translational modification N-acetylalanine. 2 stretches are compositionally biased toward pro residues: residues 7 to 33 (APNPVPAAQPRPLHSPAPAPTSTPAPS) and 41 to 51 (APTPAPAPAPA). Positions 58–69 (TGSGGAGVGSGG) are enriched in gly residues. Basic residues predominate over residues 83–94 (SQRKAQVRGLPR). Phosphoserine is present on Ser302. Low complexity predominate over residues 398-417 (SFSPSMGGGSNSSLSLDSAG). A disordered region spans residues 398–426 (SFSPSMGGGSNSSLSLDSAGTEPMPAGEK). The N-acetyltransferase domain maps to 496–649 (VIGNSLTPKA…GATLMECELN (154 aa)). At Lys542 the chain carries N6-acetyllysine. Glu568 functions as the Proton donor/acceptor in the catalytic mechanism. Residues 572–574 (CAV), 579–585 (QVKGYGT), and Tyr610 contribute to the acetyl-CoA site. Succinyl-CoA is bound by residues 572–574 (CAV), 579–585 (QVKGYGT), and Tyr610. Lys721 is covalently cross-linked (Glycyl lysine isopeptide (Lys-Gly) (interchain with G-Cter in SUMO2)). The Bromo domain maps to 721–825 (KDPDQLYTTL…KFFYFKLKEG (105 aa)). Thr728 carries the post-translational modification Phosphothreonine. Glycyl lysine isopeptide (Lys-Gly) (interchain with G-Cter in SUMO2) cross-links involve residues Lys752 and Lys784.

The protein belongs to the acetyltransferase family. GCN5 subfamily. As to quaternary structure, interacts with EP300, CREBBP and ADA2. Component of the TFTC-HAT complex, at least composed of TAF5L, TAF6L, TAF3, TADA3L, SUPT3H/SPT3, TAF2/TAFII150, TAF4/TAFII135, TAF5/TAFII100, KAT2A/GCN5L2, TAF10 and TRRAP. Component of the STAGA transcription coactivator-HAT complex, at least composed of SUPT3H, KAT2A, SUPT7L, TAF5L, TAF6L, TADA3L, TAD1L, TAF10, TAF12, TRRAP and TAF9. The STAGA core complex is associated with a subcomplex required for histone deubiquitination composed of ATXN7L3, ENY2 and USP22. Component of the ADA2A-containing complex (ATAC), composed of KAT14, KAT2A, TADA2L, TADA3L, ZZ3, MBIP, WDR5, YEATS2, CCDC101 and DR1. In the complex, it probably interacts directly with KAT14, MBIP and WDR5. Interacts with PML. Interacts with CEBPB. Interacts with TACC1, TACC2 and TACC3. Interacts with RELA. Interacts with NFATC2. Interacts with TBX5. Interacts with PLK4. Associates with the 2-oxoglutarate dehydrogenase complex. Interacts with XPC; leading to KAT2A recruitment to promoters and subsequent acetylation of histones. Interacts with ERCC3/XPB; leading to KAT2A recruitment to promoters and subsequent acetylation of histones. Interacts with ISL1. Interactions of ISL1 with MLIP1 or KAT2A may be mutually exclusive. In terms of processing, acetylated at Lys-542, inhibiting the protein acetyltransferase activity. Deacetylation at Lys-542 by SIRT6 promotes phosphorylation at Ser-302 and Thr-728 and subsequent activation of the protein acetyltransferase activity, leading to acetylation and inactivation of PPARGC1A. As to expression, in brain, highly expressed in the hippocampal CA1 region (at protein level). Also expressed in the hippocampal subregions CA3 and the dentate gyrus as well as in the cortex and prefrontal cortex. Expressed at low level in the cerebellum.

It localises to the nucleus. It is found in the chromosome. Its subcellular location is the cytoplasm. The protein resides in the cytoskeleton. The protein localises to the microtubule organizing center. It localises to the centrosome. The enzyme catalyses L-lysyl-[histone] + acetyl-CoA = N(6)-acetyl-L-lysyl-[histone] + CoA + H(+). It catalyses the reaction L-lysyl-[protein] + acetyl-CoA = N(6)-acetyl-L-lysyl-[protein] + CoA + H(+). The catalysed reaction is succinyl-CoA + L-lysyl-[protein] = N(6)-succinyl-L-lysyl-[protein] + CoA + H(+). It carries out the reaction glutaryl-CoA + L-lysyl-[protein] = N(6)-glutaryl-L-lysyl-[protein] + CoA + H(+). Its function is as follows. Protein lysine acyltransferase that can act as a acetyltransferase, glutaryltransferase, succinyltransferase or malonyltransferase, depending on the context. Acts as a histone lysine succinyltransferase: catalyzes succinylation of histone H3 on 'Lys-79' (H3K79succ), with a maximum frequency around the transcription start sites of genes. Succinylation of histones gives a specific tag for epigenetic transcription activation. Association with the 2-oxoglutarate dehydrogenase complex, which provides succinyl-CoA, is required for histone succinylation. In different complexes, functions either as an acetyltransferase (HAT) or as a succinyltransferase: in the SAGA and ATAC complexes, acts as a histone acetyltransferase. Has significant histone acetyltransferase activity with core histones, but not with nucleosome core particles. Has a a strong preference for acetylation of H3 at 'Lys-9' (H3K9ac). Acetylation of histones gives a specific tag for epigenetic transcription activation. Recruited by the XPC complex at promoters, where it specifically mediates acetylation of histone variant H2A.Z.1/H2A.Z, thereby promoting expression of target genes. Involved in long-term memory consolidation and synaptic plasticity: acts by promoting expression of a hippocampal gene expression network linked to neuroactive receptor signaling. Acts as a positive regulator of T-cell activation: upon TCR stimulation, recruited to the IL2 promoter following interaction with NFATC2 and catalyzes acetylation of histone H3 at 'Lys-9' (H3K9ac), leading to promote IL2 expression. Required for growth and differentiation of craniofacial cartilage and bone by regulating acetylation of histone H3 at 'Lys-9' (H3K9ac). Regulates embryonic stem cell (ESC) pluripotency and differentiation. Also acetylates non-histone proteins, such as CEBPB, MRE11, PPARGC1A, PLK4 and TBX5. Involved in heart and limb development by mediating acetylation of TBX5, acetylation regulating nucleocytoplasmic shuttling of TBX5. Acts as a negative regulator of centrosome amplification by mediating acetylation of PLK4. Acts as a negative regulator of gluconeogenesis by mediating acetylation and subsequent inactivation of PPARGC1A. Also acts as a histone glutaryltransferase: catalyzes glutarylation of histone H4 on 'Lys-91' (H4K91glu), a mark that destabilizes nucleosomes by promoting dissociation of the H2A-H2B dimers from nucleosomes. The chain is Histone acetyltransferase KAT2A from Mus musculus (Mouse).